A 325-amino-acid polypeptide reads, in one-letter code: Brorin (325 aa).

Positions Met1–Cys27 are cleaved as a signal peptide. The disordered stretch occupies residues Ala37–Glu121. Basic and acidic residues-rich tracts occupy residues Gly44–Pro56 and Arg64–Ser78. Positions Arg114–Asp116 match the Mediates cell adhesion motif. 2 consecutive VWFC domains span residues Lys153–Lys212 and Asn216–Lys274.

Peripherally associated with AMPAR complex. AMPAR complex consists of an inner core made of 4 pore-forming GluA/GRIA proteins (GRIA1, GRIA2, GRIA3 and GRIA4) and 4 major auxiliary subunits arranged in a twofold symmetry. One of the two pairs of distinct binding sites is occupied either by CNIH2, CNIH3 or CACNG2, CACNG3. The other harbors CACNG2, CACNG3, CACNG4, CACNG8 or GSG1L. This inner core of AMPAR complex is complemented by outer core constituents binding directly to the GluA/GRIA proteins at sites distinct from the interaction sites of the inner core constituents. Outer core constituents include at least PRRT1, PRRT2, CKAMP44/SHISA9, FRRS1L and NRN1. The proteins of the inner and outer core serve as a platform for other, more peripherally associated AMPAR constituents, including VWC2. Alone or in combination, these auxiliary subunits control the gating and pharmacology of the AMPAR complex and profoundly impact their biogenesis and protein processing.

The protein localises to the secreted. It localises to the extracellular space. Its subcellular location is the extracellular matrix. It is found in the basement membrane. The protein resides in the synapse. In terms of biological role, BMP antagonist which may play a role in neural development. Promotes cell adhesion. This is Brorin (VWC2) from Homo sapiens (Human).